Here is a 699-residue protein sequence, read N- to C-terminus: Chitinase A1 (699 aa).

Residues 1–41 form the signal peptide; it reads MINLNKHTAFKKTAKFFLGLSLLLSVIVPSFALQPATAEAA. In terms of domain architecture, GH18 spans 44-454; that stretch reads YKIVGYYPSW…NKLKADLPTG (411 aa). Residues 135–136 and 162–165 each bind chitin; these read DQ and GGWT. Glu-204 (proton donor) is an active-site residue. Chitin is bound by residues Tyr-205, 277-280, and Trp-433; that span reads MTYD. A disordered region spans residues 449 to 471; the sequence is ADLPTGGTVPPVDTTAPSVPGNA. Residues 452 to 465 are compositionally biased toward low complexity; the sequence is PTGGTVPPVDTTAP. Fibronectin type-III domains are found at residues 467–553 and 562–647; these read VPGN…TAQP and APTN…TAAE.

It belongs to the glycosyl hydrolase 18 family. Chitinase class II subfamily.

It carries out the reaction Random endo-hydrolysis of N-acetyl-beta-D-glucosaminide (1-&gt;4)-beta-linkages in chitin and chitodextrins.. The sequence is that of Chitinase A1 (chiA1) from Niallia circulans (Bacillus circulans).